The sequence spans 278 residues: 4-diphosphocytidyl-2-C-methyl-D-erythritol kinase (278 aa).

K9 is a catalytic residue. 89 to 99 (PVASGIGGGSA) contributes to the ATP binding site. D128 is a catalytic residue.

The protein belongs to the GHMP kinase family. IspE subfamily.

The enzyme catalyses 4-CDP-2-C-methyl-D-erythritol + ATP = 4-CDP-2-C-methyl-D-erythritol 2-phosphate + ADP + H(+). The protein operates within isoprenoid biosynthesis; isopentenyl diphosphate biosynthesis via DXP pathway; isopentenyl diphosphate from 1-deoxy-D-xylulose 5-phosphate: step 3/6. In terms of biological role, catalyzes the phosphorylation of the position 2 hydroxy group of 4-diphosphocytidyl-2C-methyl-D-erythritol. The polypeptide is 4-diphosphocytidyl-2-C-methyl-D-erythritol kinase (Cereibacter sphaeroides (strain ATCC 17025 / ATH 2.4.3) (Rhodobacter sphaeroides)).